The sequence spans 183 residues: Ribosome rescue factor SmrB (183 aa).

Residues 98-173 (LDLHGLTQLQ…GDAALLVLIE (76 aa)) form the Smr domain.

It belongs to the SmrB family. In terms of assembly, associates with collided ribosomes, but not with correctly translating polysomes.

In terms of biological role, acts as a ribosome collision sensor. Detects stalled/collided disomes (pairs of ribosomes where the leading ribosome is stalled and a second ribosome has collided with it) and endonucleolytically cleaves mRNA at the 5' boundary of the stalled ribosome. Stalled/collided disomes form a new interface (primarily via the 30S subunits) that binds SmrB. Cleaved mRNA becomes available for tmRNA ligation, leading to ribosomal subunit dissociation and rescue of stalled ribosomes. The chain is Ribosome rescue factor SmrB from Escherichia coli O17:K52:H18 (strain UMN026 / ExPEC).